The sequence spans 530 residues: Plexin domain-containing protein 2 (530 aa).

The N-terminal stretch at 1–30 (MARFRRADLAAAGVMLLCHFLTDRFQFAHG) is a signal peptide. The Extracellular segment spans residues 31 to 455 (EPGHHTNDWI…AEKKGGTLHA (425 aa)). N103 and N160 each carry an N-linked (GlcNAc...) asparagine glycan. One can recognise a PSI domain in the interval 327–372 (TCLQFNGCGPCVSSQIGFNCSWCSKLQRCSSGFDRHRQDWVDSGCP). Basic and acidic residues predominate over residues 378–387 (KEKMCEKTEP). The tract at residues 378–399 (KEKMCEKTEPGETSQTTTTSHT) is disordered. Low complexity predominate over residues 390–399 (TSQTTTTSHT). Residues 456–476 (GLIVGILILVLIIAAAILVTV) form a helical membrane-spanning segment. The Cytoplasmic portion of the chain corresponds to 477 to 530 (YMYHHPTSAASIFFIERRPSRWPAMKFRRGSGHPAYAEVEPVGEKEGFIVSEQC). S507 is modified (phosphoserine).

Belongs to the plexin family. As to quaternary structure, interacts with CTTN. As to expression, expressed in tumor endothelium and in vessels of some normal tissues, such as the muscle and lung.

It localises to the membrane. May play a role in tumor angiogenesis. The sequence is that of Plexin domain-containing protein 2 (Plxdc2) from Mus musculus (Mouse).